Here is a 118-residue protein sequence, read N- to C-terminus: Small ribosomal subunit protein uS13 (118 aa).

The disordered stretch occupies residues 94–118 (SLPLRGQRTKTNARTRKGPRKPIRK).

It belongs to the universal ribosomal protein uS13 family. As to quaternary structure, part of the 30S ribosomal subunit. Forms a loose heterodimer with protein S19. Forms two bridges to the 50S subunit in the 70S ribosome.

Located at the top of the head of the 30S subunit, it contacts several helices of the 16S rRNA. In the 70S ribosome it contacts the 23S rRNA (bridge B1a) and protein L5 of the 50S subunit (bridge B1b), connecting the 2 subunits; these bridges are implicated in subunit movement. Contacts the tRNAs in the A and P-sites. The protein is Small ribosomal subunit protein uS13 of Shewanella halifaxensis (strain HAW-EB4).